The following is a 126-amino-acid chain: MKQVSQLRVRKLGEHIRAEIAQLIMLGKIKDPRVSPFLSVNWVDVSGGMVCARVYVSSFMGKYKTKQGVQGLESAAGFIRSVLAKKLRLRQCPRLSFVYDESVRDGFSLSRKIDRLESGGVQTEHA.

The protein belongs to the RbfA family. Monomer. Binds 30S ribosomal subunits, but not 50S ribosomal subunits or 70S ribosomes.

Its subcellular location is the cytoplasm. Its function is as follows. One of several proteins that assist in the late maturation steps of the functional core of the 30S ribosomal subunit. Associates with free 30S ribosomal subunits (but not with 30S subunits that are part of 70S ribosomes or polysomes). Required for efficient processing of 16S rRNA. May interact with the 5'-terminal helix region of 16S rRNA. The polypeptide is Ribosome-binding factor A (Treponema pallidum (strain Nichols)).